Reading from the N-terminus, the 73-residue chain is Capsid protein G8P (73 aa).

An N-terminal signal peptide occupies residues 1–23 (MKKSLVLKASVAVATLVPMLSFA). At 24 to 44 (AEGDDPAKAAFDSLQASATEY) the chain is on the periplasmic side. Residues 45–65 (IGYAWAMVVVIVGATIGIKLF) traverse the membrane as a helical segment. The Cytoplasmic segment spans residues 66–73 (KKFTSKAS).

Belongs to the inovirus capsid protein family. In terms of assembly, homomultimerizes. There are several thousands of this protein in the phage capsid.

The protein resides in the virion. It is found in the host membrane. Self assembles to form a helical capsid wrapping up the viral genomic DNA. The capsid displays a filamentous structure with a length of 760-1950 nm and a width of 6-8 nm. The virion assembly and budding take place at the host inner membrane. The protein is Capsid protein G8P (VIII) of Escherichia coli (Bacteriophage f1).